The chain runs to 131 residues: Protein DfrA (131 aa).

This sequence belongs to the RutC family.

The protein is Protein DfrA (dfrA) of Myxococcus xanthus.